Consider the following 968-residue polypeptide: RNA polymerase-associated protein RapA (968 aa).

In terms of domain architecture, Helicase ATP-binding spans 164-334 (DVGRRHAPRV…FARLRLLDPD (171 aa)). Residue 177–184 (DEVGLGKT) coordinates ATP. Positions 280–283 (DEAH) match the DEAH box motif. The Helicase C-terminal domain maps to 490–643 (RVEWLMGYLT…HTCPTGRAVY (154 aa)).

Belongs to the SNF2/RAD54 helicase family. RapA subfamily. As to quaternary structure, interacts with the RNAP. Has a higher affinity for the core RNAP than for the holoenzyme. Its ATPase activity is stimulated by binding to RNAP.

Functionally, transcription regulator that activates transcription by stimulating RNA polymerase (RNAP) recycling in case of stress conditions such as supercoiled DNA or high salt concentrations. Probably acts by releasing the RNAP, when it is trapped or immobilized on tightly supercoiled DNA. Does not activate transcription on linear DNA. Probably not involved in DNA repair. The chain is RNA polymerase-associated protein RapA from Erwinia tasmaniensis (strain DSM 17950 / CFBP 7177 / CIP 109463 / NCPPB 4357 / Et1/99).